A 956-amino-acid polypeptide reads, in one-letter code: Golgin candidate 5 (956 aa).

Disordered regions lie at residues 70–230 and 278–298; these read MSFM…QHKI and IFESDGSPYESSIPKRSSSDE. Composition is skewed to basic and acidic residues over residues 77-89 and 118-129; these read SDEKPDTLEDSVR and ANKETNVRREAD. 2 stretches are compositionally biased toward polar residues: residues 160-177 and 184-193; these read EYSLQTPESSGYKTSLQP and TASQDSQPEQ. A compositionally biased stretch (basic and acidic residues) spans 206–219; the sequence is SEAKEVTVENKDTV. Residues 333 to 765 adopt a coiled-coil conformation; it reads SDSADVILEL…LIQKDLEREK (433 aa). Ser-793 carries the phosphoserine modification. The stretch at 851–951 forms a coiled coil; sequence SAYEATLRQK…EMYREQVNML (101 aa).

Interacts with RABH1B and RABH1C, but not with RABD1 or RABD2A.

The protein localises to the golgi apparatus. It is found in the cytoplasm. Its function is as follows. Golgi matrix protein playing a role in tethering of vesicles to Golgi membranes and in maintaining the overall structure of the Golgi apparatus. The polypeptide is Golgin candidate 5 (GC5) (Arabidopsis thaliana (Mouse-ear cress)).